A 940-amino-acid chain; its full sequence is Fibronectin-binding protein B (940 aa).

An N-terminal signal peptide occupies residues 1–36 (MKSNLRYGIRKHKLGAASVFLGTMIVVGMGQEKEAA). Positions 36-111 (AASEQNNTTV…PKVETSRVDL (76 aa)) are disordered. The span at 38-92 (SEQNNTTVEESGSSATESKASETQTTTNNVNTIDETQSYSATSTEQPSQSTQVTT) shows a compositional bias: polar residues. Positions 162-480 (TGTDVTNKVE…AQGDGKDKLK (319 aa)) are fibrinogen/elastin/tropoelastin-binding. Disordered stretches follow at residues 676 to 746 (LGYE…NIID), 764 to 878 (IIEE…GKVV), and 892 to 918 (VPTK…NGML). One copy of the D-1 repeat lies at 681–718 (GQNSGNQSFEEDTEEDKPKYEQGGNIVDIDFDSVPQIH). One copy of the D-2 repeat lies at 719-756 (GQNNGNQSFEEDTEKDKPKYEQGGNIIDIDFDSVPHIH). The D-3 repeat unit spans residues 757 to 795 (GFNKHTEIIEEDTNKDKPNYQFGGHNSVDFEEDTLPQVS). Over residues 764–774 (IIEEDTNKDKP) the composition is skewed to basic and acidic residues. A compositionally biased stretch (polar residues) spans 792–802 (PQVSGHNEGQQ). Residues 796–814 (GHNEGQQTIEEDTTPPIVP) form a D-4; truncated repeat. Positions 811-860 (PIVPPTPPTPEVPSEPETPTPPTPEVPSEPETPTPPTPEVPTEPGKPIPP) are enriched in pro residues. WR repeat units follow at residues 815–828 (PTPP…EPET), 829–842 (PTPP…EPET), and 857–870 (PIPP…KPSK). The short motif at 904–908 (LPETG) is the LPXTG sorting signal element. Thr907 carries the pentaglycyl murein peptidoglycan amidated threonine modification. Residues 908–940 (GGEESTNNGMLFGGLFSILGLALLRRNKKNHKA) constitute a propeptide, removed by sortase.

In terms of assembly, interacts with host PLG; this interaction provides active plasmin on the surface of bacteria cells. Interacts with host histones.

The protein localises to the secreted. Its subcellular location is the cell wall. Functionally, multifunctional protein which promotes bacterial attachment to fibrinogen, elastin and fibronectin. Also promotes the accumulation phase and the primary attachment phase of biofilm formation. In addition, protects against the antimicrobial activity of histones. Mechanistically, captures histones and prevents them from reaching the bacterial membrane and simultaneously binds plasminogen, thereby promoting its conversion to plasmin to destroy the bound histones. The protein is Fibronectin-binding protein B of Staphylococcus aureus (strain USA300).